The following is a 148-amino-acid chain: UPAR/Ly6 domain-containing protein bero (148 aa).

The first 23 residues, 1–23, serve as a signal peptide directing secretion; that stretch reads MVSALKCSLAVAVMISLACSAYA. Cystine bridges form between Cys-26–Cys-72, Cys-29–Cys-37, Cys-51–Cys-90, Cys-102–Cys-116, and Cys-119–Cys-124. An N-linked (GlcNAc...) asparagine glycan is attached at Asn-68. A glycan (N-linked (GlcNAc...) asparagine) is linked at Asn-125. Residue Asn-125 is the site of GPI-anchor amidated asparagine attachment. Residues 126-148 constitute a propeptide, removed in mature form; that stretch reads GSSSLAPIAGAILLFFGVARLLA. Residues 128-148 form a helical membrane-spanning segment; that stretch reads SSLAPIAGAILLFFGVARLLA.

The protein belongs to the quiver family.

Its subcellular location is the cell membrane. It localises to the membrane. The protein resides in the perikaryon. It is found in the cell projection. The protein localises to the neuron projection. Functionally, necessary for the maintenance of persistent fluctuating activities and suppression of acute evoked activities in abdominal leucokinin-producing (ABLK) neurons to negatively regulate neuron excitability involved in nociceptive (perception of pain) behavioral responses. This is UPAR/Ly6 domain-containing protein bero from Drosophila melanogaster (Fruit fly).